The sequence spans 136 residues: Large ribosomal subunit protein bL21 (136 aa).

This sequence belongs to the bacterial ribosomal protein bL21 family. In terms of assembly, part of the 50S ribosomal subunit. Contacts protein L20.

In terms of biological role, this protein binds to 23S rRNA in the presence of protein L20. This is Large ribosomal subunit protein bL21 from Gloeothece citriformis (strain PCC 7424) (Cyanothece sp. (strain PCC 7424)).